Consider the following 201-residue polypeptide: Holliday junction branch migration complex subunit RuvA (201 aa).

The interval 1–63 is domain I; sequence MYDYIKGTVT…EDNISLFGFQ (63 aa). Positions 64–142 are domain II; that stretch reads TTEERYLFKK…DVVASEIVYV (79 aa). Residues 143–153 are flexible linker; the sequence is APENDMVAGLS. The interval 153 to 201 is domain III; it reads SPQLEEAVLALEALGYSTRELKKVIPKLAKEEDLTSDAYIKLALQLMTK.

It belongs to the RuvA family. Homotetramer. Forms an RuvA(8)-RuvB(12)-Holliday junction (HJ) complex. HJ DNA is sandwiched between 2 RuvA tetramers; dsDNA enters through RuvA and exits via RuvB. An RuvB hexamer assembles on each DNA strand where it exits the tetramer. Each RuvB hexamer is contacted by two RuvA subunits (via domain III) on 2 adjacent RuvB subunits; this complex drives branch migration. In the full resolvosome a probable DNA-RuvA(4)-RuvB(12)-RuvC(2) complex forms which resolves the HJ.

Its subcellular location is the cytoplasm. In terms of biological role, the RuvA-RuvB-RuvC complex processes Holliday junction (HJ) DNA during genetic recombination and DNA repair, while the RuvA-RuvB complex plays an important role in the rescue of blocked DNA replication forks via replication fork reversal (RFR). RuvA specifically binds to HJ cruciform DNA, conferring on it an open structure. The RuvB hexamer acts as an ATP-dependent pump, pulling dsDNA into and through the RuvAB complex. HJ branch migration allows RuvC to scan DNA until it finds its consensus sequence, where it cleaves and resolves the cruciform DNA. In Listeria monocytogenes serotype 4a (strain HCC23), this protein is Holliday junction branch migration complex subunit RuvA.